The following is a 159-amino-acid chain: MKSQWSNFHQIGRNSFLAASTVYVSNEFNFLNTSLLNRRSFCFAEGDRSSFVVLKSEAEFNSALSKARDGSLPSVFYFTAAWCGPCRLISPVILELSNKYPDVTTYKVDIDEGGLSNAIGKLNVSAVPTLQFFKGGVKKAEIVGVDVVRLKSVMEQLYK.

A Phosphoserine modification is found at Ser40. Residues 43–159 (FAEGDRSSFV…LKSVMEQLYK (117 aa)) form the Thioredoxin domain. Active-site nucleophile residues include Cys83 and Cys86. Cysteines 83 and 86 form a disulfide.

It belongs to the thioredoxin family. Plant O-type subfamily.

The protein resides in the mitochondrion. Thiol-disulfide oxidoreductase that may participate in various redox reactions. Possesses insulin disulfide bonds reducing activity. Reduced by thioredoxin reductases NTRA and NTRB. This Arabidopsis thaliana (Mouse-ear cress) protein is Thioredoxin O2, mitochondrial.